Reading from the N-terminus, the 203-residue chain is Putative 3-methyladenine DNA glycosylase (203 aa).

The protein belongs to the DNA glycosylase MPG family.

The protein is Putative 3-methyladenine DNA glycosylase of Clostridium botulinum (strain Loch Maree / Type A3).